A 707-amino-acid polypeptide reads, in one-letter code: Tubulin polyglutamylase ttll-11 (707 aa).

In terms of domain architecture, TTL spans 124 to 488 (RFTIDTSRAK…PLVRDTLLLV (365 aa)). ATP contacts are provided by residues 279–282 (QEYV), lysine 293, and aspartate 295. Residues 675–707 (RNRSGTNGRKQNFTDDNNNPNSFAHLPKINERL) are disordered. The span at 677-696 (RSGTNGRKQNFTDDNNNPNS) shows a compositional bias: polar residues.

This sequence belongs to the tubulin--tyrosine ligase family. In terms of tissue distribution, expressed in amphid sensory neurons. Weakly expressed in body wall muscles. Isoform a: Specifically expressed in ciliated sensory neurons in the head, including the IL1s, OLQ, head CEP, and amphid neurons. In the male tail, expressed in HOA, RnA, and phasmid neurons. Isoform b: Specifically expressed in male and hermaphrodite IL2 ciliated sensory neurons, and in male-specific CEM, HOB and RnB ciliated sensory neurons.

The protein localises to the cell projection. It is found in the axon. Its subcellular location is the perikaryon. It localises to the dendrite. The protein resides in the cilium. The protein localises to the extracellular vesicle. The enzyme catalyses L-glutamyl-[protein] + L-glutamate + ATP = gamma-L-glutamyl-L-glutamyl-[protein] + ADP + phosphate + H(+). Its function is as follows. Polyglutamylase which preferentially modifies tubulin. Involved in the side-chain initiation step of the polyglutamylation reaction. By controlling tubulin glutamylation, regulates ciliary specialization and motor-based transport. Promotes the formation of A and B tubule singlets by splaying microtubule doublets in cilia. Together with ttll-4 and 5, required for male mating. Specifically promotes tubulin glutamylation in a subset of ciliated neurons including amphid, phasmid, CEP and RnA neurons. In terms of biological role, specifically promotes tubulin glutamylation in male ciliated CEM, HOB and RnB neurons that release bioactive extracellular vesicles. Regulates the localization of TRP channel pdk-2 in male CEM, HOB and RnB neurons. Regulates the environmental release of bioactive extracellular vesicles in cilia. The chain is Tubulin polyglutamylase ttll-11 from Caenorhabditis elegans.